The sequence spans 353 residues: Protein RecA (353 aa).

Residue 67-74 participates in ATP binding; sequence GPESSGKT.

This sequence belongs to the RecA family.

It localises to the cytoplasm. Functionally, can catalyze the hydrolysis of ATP in the presence of single-stranded DNA, the ATP-dependent uptake of single-stranded DNA by duplex DNA, and the ATP-dependent hybridization of homologous single-stranded DNAs. It interacts with LexA causing its activation and leading to its autocatalytic cleavage. The protein is Protein RecA of Chlamydia pneumoniae (Chlamydophila pneumoniae).